The chain runs to 149 residues: Large ribosomal subunit protein bL9 (149 aa).

The protein belongs to the bacterial ribosomal protein bL9 family.

Functionally, binds to the 23S rRNA. The protein is Large ribosomal subunit protein bL9 of Fusobacterium nucleatum subsp. nucleatum (strain ATCC 25586 / DSM 15643 / BCRC 10681 / CIP 101130 / JCM 8532 / KCTC 2640 / LMG 13131 / VPI 4355).